The primary structure comprises 319 residues: tRNA uridine(34) hydroxylase (319 aa).

One can recognise a Rhodanese domain in the interval 127–221; sequence KQEDTVIIDA…YGKDPEVQGE (95 aa). Cys-181 serves as the catalytic Cysteine persulfide intermediate.

The protein belongs to the TrhO family.

The catalysed reaction is uridine(34) in tRNA + AH2 + O2 = 5-hydroxyuridine(34) in tRNA + A + H2O. Its function is as follows. Catalyzes oxygen-dependent 5-hydroxyuridine (ho5U) modification at position 34 in tRNAs. The chain is tRNA uridine(34) hydroxylase from Bacillus cereus (strain B4264).